A 386-amino-acid chain; its full sequence is Zinc finger CCCH domain-containing protein 2 (386 aa).

C3H1-type zinc fingers lie at residues 116–143 and 151–175; these read HYSG…HGVF and RYRT…HTPD. 2 disordered regions span residues 180–200 and 220–252; these read LPAQ…ESYD and SSPT…RRGS. Positions 182–192 are enriched in polar residues; the sequence is AQQSSPRSVAS. Positions 220–229 are enriched in low complexity; that stretch reads SSPTSTLMSP. The span at 230–241 shows a compositional bias: pro residues; the sequence is PKSPPSESPPLS.

It localises to the nucleus. Functionally, involved in leaf senescence delay. May repress jasmonic acid (JA) signaling role in promoting leaf senescence. May regulate panicle development and pollination/fertilization process. This is Zinc finger CCCH domain-containing protein 2 from Oryza sativa subsp. japonica (Rice).